The chain runs to 262 residues: Hydroxyethylthiazole kinase (262 aa).

Met-44 serves as a coordination point for substrate. Positions 118 and 166 each coordinate ATP. Gly-193 contributes to the substrate binding site.

It belongs to the Thz kinase family. Mg(2+) serves as cofactor.

The enzyme catalyses 5-(2-hydroxyethyl)-4-methylthiazole + ATP = 4-methyl-5-(2-phosphooxyethyl)-thiazole + ADP + H(+). It participates in cofactor biosynthesis; thiamine diphosphate biosynthesis; 4-methyl-5-(2-phosphoethyl)-thiazole from 5-(2-hydroxyethyl)-4-methylthiazole: step 1/1. In terms of biological role, catalyzes the phosphorylation of the hydroxyl group of 4-methyl-5-beta-hydroxyethylthiazole (THZ). The chain is Hydroxyethylthiazole kinase from Chlamydia felis (strain Fe/C-56) (Chlamydophila felis).